A 122-amino-acid chain; its full sequence is Large ribosomal subunit protein uL18 (122 aa).

The protein belongs to the universal ribosomal protein uL18 family. As to quaternary structure, part of the 50S ribosomal subunit; part of the 5S rRNA/L5/L18/L25 subcomplex. Contacts the 5S and 23S rRNAs.

This is one of the proteins that bind and probably mediate the attachment of the 5S RNA into the large ribosomal subunit, where it forms part of the central protuberance. The sequence is that of Large ribosomal subunit protein uL18 from Prochlorococcus marinus (strain MIT 9301).